The chain runs to 409 residues: All trans-polyprenyl-diphosphate synthase PDSS1 (409 aa).

Positions 128, 131, and 167 each coordinate isopentenyl diphosphate. Residues Asp174 and Asp178 each coordinate Mg(2+). Position 184 (Arg184) interacts with isopentenyl diphosphate.

It belongs to the FPP/GGPP synthase family. Heterotetramer composed of 2 PDSS1/DPS1 and 2 PDSS2/DLP1 subunits. Requires Mg(2+) as cofactor.

It is found in the mitochondrion. It catalyses the reaction 7 isopentenyl diphosphate + (2E,6E)-farnesyl diphosphate = all-trans-decaprenyl diphosphate + 7 diphosphate. The enzyme catalyses 6 isopentenyl diphosphate + (2E,6E)-farnesyl diphosphate = all-trans-nonaprenyl diphosphate + 6 diphosphate. The protein operates within cofactor biosynthesis; ubiquinone biosynthesis. Heterotetrameric enzyme that catalyzes the condensation of farnesyl diphosphate (FPP), which acts as a primer, and isopentenyl diphosphate (IPP) to produce prenyl diphosphates of varying chain lengths and participates in the determination of the side chain of ubiquinone. Supplies nona and decaprenyl diphosphate, the precursors for the side chain of the isoprenoid quinones ubiquinone-9 (Q9)and ubiquinone-10 (Q10) respectively. The enzyme adds isopentenyl diphosphate molecules sequentially to farnesyl diphosphate with trans stereochemistry. This chain is All trans-polyprenyl-diphosphate synthase PDSS1, found in Mus musculus (Mouse).